The sequence spans 462 residues: GTPase Der (462 aa).

EngA-type G domains follow at residues 9–171 and 201–372; these read KTIA…NLNQ and IQVG…ECFS. GTP contacts are provided by residues 15 to 22, 62 to 66, 123 to 126, 207 to 214, 254 to 258, and 318 to 321; these read GQPNVGKS, DTGGM, NKID, GRVNVGKS, DTAGI, and NKWD. The KH-like domain occupies 373–457; sequence KRIPTSLLNS…PLILNAKDKK (85 aa).

The protein belongs to the TRAFAC class TrmE-Era-EngA-EngB-Septin-like GTPase superfamily. EngA (Der) GTPase family. In terms of assembly, associates with the 50S ribosomal subunit.

GTPase that plays an essential role in the late steps of ribosome biogenesis. This chain is GTPase Der, found in Helicobacter pylori (strain P12).